Reading from the N-terminus, the 283-residue chain is Probable endonuclease 4 (283 aa).

Zn(2+) contacts are provided by His-69, His-113, Glu-148, Asp-182, His-185, His-217, Asp-230, His-232, and Glu-262.

It belongs to the AP endonuclease 2 family. It depends on Zn(2+) as a cofactor.

It catalyses the reaction Endonucleolytic cleavage to 5'-phosphooligonucleotide end-products.. Its function is as follows. Endonuclease IV plays a role in DNA repair. It cleaves phosphodiester bonds at apurinic or apyrimidinic (AP) sites, generating a 3'-hydroxyl group and a 5'-terminal sugar phosphate. The chain is Probable endonuclease 4 from Bifidobacterium longum (strain NCC 2705).